The chain runs to 1038 residues: Bone morphogenetic protein receptor type-2 (1038 aa).

The first 26 residues, 1–26, serve as a signal peptide directing secretion; that stretch reads MTSSLHRPFRVPWLLWAVLLVSTTAA. Residues 27-150 lie on the Extracellular side of the membrane; it reads SQNQERLCAF…PPHSFNRDET (124 aa). Disulfide bonds link Cys34–Cys66, Cys60–Cys84, Cys94–Cys117, Cys99–Cys116, and Cys118–Cys123. Residue Asn55 is glycosylated (N-linked (GlcNAc...) asparagine). Residue Asn110 is glycosylated (N-linked (GlcNAc...) asparagine). Residue Asn126 is glycosylated (N-linked (GlcNAc...) asparagine). The chain crosses the membrane as a helical span at residues 151–171; it reads IIIALASVSVLAVLIVALCFG. Residues 172–1038 lie on the Cytoplasmic side of the membrane; the sequence is YRMLTGDRKQ…VSKDIGMNCL (867 aa). In terms of domain architecture, Protein kinase spans 203–504; it reads LKLLELIGRG…QCAEERMAEL (302 aa). ATP contacts are provided by residues 209–217, Lys230, and 280–282; these read IGRGRYGAV and EYY. The active-site Proton acceptor is Asp333. ATP contacts are provided by residues 337–338 and Asp351; that span reads RN. The residue at position 379 (Thr379) is a Phosphothreonine. Ser586 carries the phosphoserine modification. The tract at residues 593-626 is disordered; the sequence is QAQARIPSPETSVTSLSTNTTTTNTTGLTPSTGM. Residues 603–626 are compositionally biased toward low complexity; it reads TSVTSLSTNTTTTNTTGLTPSTGM. Phosphoserine occurs at positions 680 and 681. The tract at residues 746 to 769 is disordered; that stretch reads PKQQNLPKRPTSLPLNTKNSTKEP. Ser843 is subject to Phosphoserine. Residues 872–896 are compositionally biased toward basic and acidic residues; sequence RREQQAGHDEGVLDRLVDRRERPLE. A disordered region spans residues 872 to 974; sequence RREQQAGHDE…SGSGEKIKRR (103 aa). Composition is skewed to polar residues over residues 909-924 and 937-964; these read PCSE…TSTA and RPNS…QDGK.

Belongs to the protein kinase superfamily. TKL Ser/Thr protein kinase family. TGFB receptor subfamily. As to quaternary structure, interacts with GDF5. Interacts with BMP4. Interacts with SCUBE3. Interacts with TSC22D1/TSC-22. Interacts with activin A/INHBA. Mg(2+) serves as cofactor. The cofactor is Mn(2+).

The protein resides in the cell membrane. The enzyme catalyses L-threonyl-[receptor-protein] + ATP = O-phospho-L-threonyl-[receptor-protein] + ADP + H(+). It carries out the reaction L-seryl-[receptor-protein] + ATP = O-phospho-L-seryl-[receptor-protein] + ADP + H(+). Its function is as follows. On ligand binding, forms a receptor complex consisting of two type II and two type I transmembrane serine/threonine kinases. Type II receptors phosphorylate and activate type I receptors which autophosphorylate, then bind and activate SMAD transcriptional regulators. Can also mediate signaling through the activation of the p38MAPK cascade. Binds to BMP7, BMP2 and, less efficiently, BMP4. Binding is weak but enhanced by the presence of type I receptors for BMPs. Mediates induction of adipogenesis by GDF6. Promotes signaling also by binding to activin A/INHBA. The protein is Bone morphogenetic protein receptor type-2 (Bmpr2) of Mus musculus (Mouse).